Reading from the N-terminus, the 428-residue chain is Adenylosuccinate synthetase (428 aa).

Residues 11 to 17 (GDEGKGK) and 39 to 41 (GHT) contribute to the GTP site. Residue aspartate 12 is the Proton acceptor of the active site. The Mg(2+) site is built by aspartate 12 and glycine 39. Residues 12–15 (DEGK), 37–40 (NAGH), threonine 130, arginine 144, asparagine 226, threonine 241, and arginine 305 each bind IMP. The active-site Proton donor is histidine 40. 301–307 (VTTGRKR) lines the substrate pocket. Residues arginine 307, 333 to 335 (KLD), and 415 to 417 (GTG) each bind GTP.

Belongs to the adenylosuccinate synthetase family. In terms of assembly, homodimer. Requires Mg(2+) as cofactor.

The protein localises to the cytoplasm. The enzyme catalyses IMP + L-aspartate + GTP = N(6)-(1,2-dicarboxyethyl)-AMP + GDP + phosphate + 2 H(+). The protein operates within purine metabolism; AMP biosynthesis via de novo pathway; AMP from IMP: step 1/2. In terms of biological role, plays an important role in the de novo pathway and in the salvage pathway of purine nucleotide biosynthesis. Catalyzes the first committed step in the biosynthesis of AMP from IMP. In Candida albicans (strain SC5314 / ATCC MYA-2876) (Yeast), this protein is Adenylosuccinate synthetase.